Here is a 471-residue protein sequence, read N- to C-terminus: MQAASAFATCLLASVGGNSSAVAFPNQANYSTLVAPYNFDLLTTPSAIVWPQDTQQVAAAVKCAVDSDIKVQPKSGGHNYGNYGSTTGELSVNLDNLQHFSMDETSWTARLGPGNRLGRVTELMYNNGGRHVPHGTTFTVGLGGHATVGGAGAASRMHGLLLDYVEEVEVVLANSSIVRASKSHNEDLFFAVRGAASSVGIVTDFSIRTEPVPVSSVTYSYIWEGTDPAARAEVFLTWQSLLAGGSLPQHMAYDLVATANSMILGGAYFGSQEDFEAFNLSSHFKVAPDVAHIKTYTNFFDFSAAASAQTKAAGIASPSHFYAKSLVFNQQTLIPDDAAEEVFKYLATTKNGTDLYAVTFAALGGAVRDVSASETAFYHRDASYFMFSFGRTSGDLTDTTVQFLDGLSEVLTSGQPDAYYGQYVGNVDPRQSTDKALTGYYGKNLHRLQQIKSAVDPNDVFHNQQSIPPLS.

A signal peptide spans 1–23; the sequence is MQAASAFATCLLASVGGNSSAVA. N-linked (GlcNAc...) asparagine glycans are attached at residues Asn18, Asn29, Asn174, Asn279, and Asn351. In terms of domain architecture, FAD-binding PCMH-type spans 41 to 212; sequence LLTTPSAIVW…TDFSIRTEPV (172 aa).

Belongs to the oxygen-dependent FAD-linked oxidoreductase family. The cofactor is FAD.

It participates in secondary metabolite biosynthesis. In terms of biological role, FAD-linked oxidoreductase; part of the gene cluster that mediates the biosynthesis of sorbicillinoids, a diverse group of yellow secondary metabolites that restrict growth of competing pathogenic fungi but not of bacteria. Sorbicillinoids biosynthesis requires the action of two PKSs. SorA iteratively combines three acetyl units and the growing chain is modified by the ketoacyl reductase subunit, and optional by the enoyl reductase subunit in the second cycle. The polyketide is then handed over to the PKS SorB, which adds three more acetyl units, and two methyl groups. SorB releases an aldehyde, which undergoes spontaneous cyclization resulting in the formation of sorbicillin or 2',3'-dihydrosorbicillin. The monooxygenase sorC oxidizes sorbicillin and 2',3'-dihydrosorbicillin to 2',3'-dihydrosorbicillinol and sorbicillinol, respectively. The oxidoreductase sorD further converts sorbicillinol into oxosorbicillinol. Sorbicillinol is the building block for the other sorbicillinoids such as disorbicillinol, bisvertinolon, and dihydrobisvertinolone. The polypeptide is FAD-linked oxidoreductase sorD (Penicillium rubens (strain ATCC 28089 / DSM 1075 / NRRL 1951 / Wisconsin 54-1255) (Penicillium chrysogenum)).